A 574-amino-acid polypeptide reads, in one-letter code: Proline--tRNA ligase (574 aa).

This sequence belongs to the class-II aminoacyl-tRNA synthetase family. ProS type 1 subfamily. In terms of assembly, homodimer.

Its subcellular location is the cytoplasm. The catalysed reaction is tRNA(Pro) + L-proline + ATP = L-prolyl-tRNA(Pro) + AMP + diphosphate. Its function is as follows. Catalyzes the attachment of proline to tRNA(Pro) in a two-step reaction: proline is first activated by ATP to form Pro-AMP and then transferred to the acceptor end of tRNA(Pro). As ProRS can inadvertently accommodate and process non-cognate amino acids such as alanine and cysteine, to avoid such errors it has two additional distinct editing activities against alanine. One activity is designated as 'pretransfer' editing and involves the tRNA(Pro)-independent hydrolysis of activated Ala-AMP. The other activity is designated 'posttransfer' editing and involves deacylation of mischarged Ala-tRNA(Pro). The misacylated Cys-tRNA(Pro) is not edited by ProRS. The polypeptide is Proline--tRNA ligase (Marinomonas sp. (strain MWYL1)).